The following is a 400-amino-acid chain: NADPH dehydrogenase 2 (400 aa).

T38 and Q115 together coordinate FMN. H192 and N195 together coordinate substrate. Residue Y197 is the Proton donor of the active site. Positions 244 and 349 each coordinate FMN. S353 bears the Phosphoserine mark. Position 376 (Y376) interacts with substrate. Residue S379 is modified to Phosphoserine.

This sequence belongs to the NADH:flavin oxidoreductase/NADH oxidase family. Homodimer or heterodimer with OYE3. FMN is required as a cofactor.

The protein localises to the cytoplasm. It is found in the nucleus. The protein resides in the mitochondrion. The enzyme catalyses A + NADPH + H(+) = AH2 + NADP(+). Functionally, flavin-dependent enoate reductase that catalyzes the chemo- and stereoslective hydrogenation of electron-poor alkenes. The enzyme is reduced by NADPH, and oxygen, quinones, and alpha,beta-unsaturated aldehydes and ketones can act as electron acceptors to complete catalytic turnover. The physiological oxidant remains elusive. Has an antioxidant activity, reducing reactive oxygen species (ROS) levels when overexpressed. Formation of OYE2-OYE3 heterodimers contribute to the induction of programmed cell death upon oxidative stress. This Saccharomyces cerevisiae (strain ATCC 204508 / S288c) (Baker's yeast) protein is NADPH dehydrogenase 2.